The chain runs to 474 residues: Glutamate--tRNA ligase (474 aa).

A 'HIGH' region motif is present at residues 9–19; that stretch reads PSPTGYLHVGG. Residues 240–244 carry the 'KMSKS' region motif; sequence KLSKR. An ATP-binding site is contributed by lysine 243.

Belongs to the class-I aminoacyl-tRNA synthetase family. Glutamate--tRNA ligase type 1 subfamily. As to quaternary structure, monomer.

It localises to the cytoplasm. The enzyme catalyses tRNA(Glu) + L-glutamate + ATP = L-glutamyl-tRNA(Glu) + AMP + diphosphate. Catalyzes the attachment of glutamate to tRNA(Glu) in a two-step reaction: glutamate is first activated by ATP to form Glu-AMP and then transferred to the acceptor end of tRNA(Glu). This chain is Glutamate--tRNA ligase, found in Aliivibrio fischeri (strain MJ11) (Vibrio fischeri).